A 316-amino-acid chain; its full sequence is Pantothenate kinase (316 aa).

95 to 102 lines the ATP pocket; that stretch reads GSVAVGKS.

Belongs to the prokaryotic pantothenate kinase family.

The protein resides in the cytoplasm. It catalyses the reaction (R)-pantothenate + ATP = (R)-4'-phosphopantothenate + ADP + H(+). The protein operates within cofactor biosynthesis; coenzyme A biosynthesis; CoA from (R)-pantothenate: step 1/5. The chain is Pantothenate kinase from Sodalis glossinidius (strain morsitans).